A 179-amino-acid polypeptide reads, in one-letter code: Large ribosomal subunit protein uL5 (179 aa).

This sequence belongs to the universal ribosomal protein uL5 family. Part of the 50S ribosomal subunit; part of the 5S rRNA/L5/L18/L25 subcomplex. Contacts the 5S rRNA and the P site tRNA. Forms a bridge to the 30S subunit in the 70S ribosome.

Its function is as follows. This is one of the proteins that bind and probably mediate the attachment of the 5S RNA into the large ribosomal subunit, where it forms part of the central protuberance. In the 70S ribosome it contacts protein S13 of the 30S subunit (bridge B1b), connecting the 2 subunits; this bridge is implicated in subunit movement. Contacts the P site tRNA; the 5S rRNA and some of its associated proteins might help stabilize positioning of ribosome-bound tRNAs. The sequence is that of Large ribosomal subunit protein uL5 from Macrococcus caseolyticus (strain JCSC5402) (Macrococcoides caseolyticum).